Consider the following 186-residue polypeptide: Elongation factor P (186 aa).

The protein belongs to the elongation factor P family.

It localises to the cytoplasm. It functions in the pathway protein biosynthesis; polypeptide chain elongation. In terms of biological role, involved in peptide bond synthesis. Stimulates efficient translation and peptide-bond synthesis on native or reconstituted 70S ribosomes in vitro. Probably functions indirectly by altering the affinity of the ribosome for aminoacyl-tRNA, thus increasing their reactivity as acceptors for peptidyl transferase. This chain is Elongation factor P, found in Crocosphaera subtropica (strain ATCC 51142 / BH68) (Cyanothece sp. (strain ATCC 51142)).